The primary structure comprises 100 residues: Small ribosomal subunit protein uS14c (100 aa).

It belongs to the universal ribosomal protein uS14 family. Part of the 30S ribosomal subunit.

The protein resides in the plastid. Its subcellular location is the chloroplast. Its function is as follows. Binds 16S rRNA, required for the assembly of 30S particles. The chain is Small ribosomal subunit protein uS14c from Cyanidium caldarium (Red alga).